The chain runs to 681 residues: Potassium-transporting ATPase ATP-binding subunit (681 aa).

Helical transmembrane passes span 30–50 (LLVY…FFGI), 59–79 (LAIA…EAIA), 216–236 (ILLV…LPFT), and 255–275 (IALL…SIGI). The active-site 4-aspartylphosphate intermediate is Asp306. ATP-binding positions include Asp343, Glu347, 376 to 383 (FTATTRMS), and Lys394. Residues Asp517 and Asp521 each coordinate Mg(2+). The next 3 membrane-spanning stretches (helical) occupy residues 587 to 607 (FAII…LNLM), 615 to 635 (AILS…PLSL), and 661 to 681 (LIAP…LGIV).

It belongs to the cation transport ATPase (P-type) (TC 3.A.3) family. Type IA subfamily. As to quaternary structure, the system is composed of three essential subunits: KdpA, KdpB and KdpC.

It localises to the cell membrane. The enzyme catalyses K(+)(out) + ATP + H2O = K(+)(in) + ADP + phosphate + H(+). In terms of biological role, part of the high-affinity ATP-driven potassium transport (or Kdp) system, which catalyzes the hydrolysis of ATP coupled with the electrogenic transport of potassium into the cytoplasm. This subunit is responsible for energy coupling to the transport system and for the release of the potassium ions to the cytoplasm. The sequence is that of Potassium-transporting ATPase ATP-binding subunit from Listeria monocytogenes serotype 4b (strain CLIP80459).